A 597-amino-acid chain; its full sequence is Arginine--tRNA ligase (597 aa).

Positions Pro137–His147 match the 'HIGH' region motif.

Belongs to the class-I aminoacyl-tRNA synthetase family. As to quaternary structure, monomer.

The protein resides in the cytoplasm. It carries out the reaction tRNA(Arg) + L-arginine + ATP = L-arginyl-tRNA(Arg) + AMP + diphosphate. This chain is Arginine--tRNA ligase, found in Parasynechococcus marenigrum (strain WH8102).